A 315-amino-acid chain; its full sequence is Zinc finger transcription factor ref-2 (315 aa).

Residues Val83–His112 form a C2H2-type 1; atypical zinc finger. A C2H2-type 2; degenerate zinc finger spans residues Lys124–His146. C2H2-type zinc fingers lie at residues Phe152–His174, Phe180–His204, and Tyr210–His234. Residues Ser225–Pro270 are disordered. Over residues Val233–Ser249 the composition is skewed to basic and acidic residues. Residues Asp251–Pro270 are compositionally biased toward polar residues.

In terms of assembly, interacts with TCF transcription factor pop-1; the interaction is direct and facilitates transcriptional activation; transcription may be repressed by beta-catenin/sys-1.

It is found in the nucleus. It localises to the cytoplasm. Transcription factor. Modulates expression of target genes by binding to regulatory elements. Required for normal cell division timing and cell positioning in anterior lineages, acting in a cell-autonomous manner. Required for development, fusion and fate of cells of the ventral epidermis, the Pn.p cells, during larval development; acts in concert with homeobox genes lin-39 and mab-5. Required for the specification of the AIY interneuron. In complex with TCF transcription factor pop-1, positively modulates expression of LIM/homeobox protein ttx-3 in anterior daughter cells of the SMDD/AIY neuron lineage. The chain is Zinc finger transcription factor ref-2 from Caenorhabditis elegans.